Here is a 355-residue protein sequence, read N- to C-terminus: tRNA pseudouridine synthase D (355 aa).

D84 functions as the Nucleophile in the catalytic mechanism. One can recognise a TRUD domain in the interval 160–306 (GVPNYFGLQR…MAHERRILRL (147 aa)).

It belongs to the pseudouridine synthase TruD family.

The enzyme catalyses uridine(13) in tRNA = pseudouridine(13) in tRNA. In terms of biological role, responsible for synthesis of pseudouridine from uracil-13 in transfer RNAs. The sequence is that of tRNA pseudouridine synthase D from Pseudomonas aeruginosa (strain LESB58).